Reading from the N-terminus, the 314-residue chain is Basic leucine zipper 63 (314 aa).

The residue at position 29 (serine 29) is a Phosphoserine; by KIN10. Residues 94 to 177 (KPQDTSGRSD…SRRRKQAHLS (84 aa)) form a disordered region. Residues 96–133 (QDTSGRSDNGGANESEQASLASSKATPMMSSAITSGSE) show a composition bias toward polar residues. The bZIP domain occupies 151-214 (NVKRVKRMLS…NDASVENRVL (64 aa)). Residues 153–172 (KRVKRMLSNRESARRSRRRK) are basic motif. The Nuclear localization signal 1 motif lies at 155 to 162 (VKRMLSNR). The segment at 179–193 (LETQVSQLRVENSKL) is leucine-zipper. A disordered region spans residues 253-274 (SLPSETSNSPDTTSSQVTTPEI). A phosphoserine; by KIN10 mark is found at serine 294 and serine 300. The Nuclear localization signal 2 signature appears at 295 to 302 (MRRVESLE).

It belongs to the bZIP family. In terms of assembly, homodimer. Forms a heterodimer with LSD1, BZIP1, BZIP2, BZIP9, BZIP10, BZIP11, BZIP25, BZIP44 and BZIP53. Interacts with KIN10 and SNF4. Component of a ternary complex composed of BZIP2-BZIP63 heterodimer and KIN10. Post-translationally, phosphorylated. The phosphorylation at Ser-29, Ser-294 and Ser-300 by KIN10 strongly enhances its ability to form homo- as well as heterodimers and are then essential for its transcriptional activity. Expressed in roots, shoots, young leaves, pollen, and flowers.

It localises to the nucleus. Up-regulated by KIN10 under a phosphorylation-dependent manner. Functionally, transcription factor involved in controlling responses to starvation. BZIP2-BZIP63-KIN10 complex binds to the ETFQO promoter to up-regulate its transcription. This is Basic leucine zipper 63 (BZIP63) from Arabidopsis thaliana (Mouse-ear cress).